The chain runs to 228 residues: Cytochrome c oxidase subunit 2 (228 aa).

The Mitochondrial intermembrane portion of the chain corresponds to 1–14 (MAYPFQLGFQDATS). The helical transmembrane segment at 15–45 (PIMEELLHFHDHTLMIVFLISSLVLYIISLM) threads the bilayer. Residues 46–59 (LTTKLTHTSTMDAQ) are Mitochondrial matrix-facing. Residues 60–87 (EVETIWTILPAIILILIALPSLRILYMM) traverse the membrane as a helical segment. Topologically, residues 88 to 228 (DEINNPALTV…FEKWSTSMLT (141 aa)) are mitochondrial intermembrane. Histidine 161, cysteine 196, glutamate 198, cysteine 200, histidine 204, and methionine 207 together coordinate Cu cation. Glutamate 198 lines the Mg(2+) pocket. Tyrosine 218 is subject to Phosphotyrosine.

The protein belongs to the cytochrome c oxidase subunit 2 family. As to quaternary structure, component of the cytochrome c oxidase (complex IV, CIV), a multisubunit enzyme composed of 14 subunits. The complex is composed of a catalytic core of 3 subunits MT-CO1, MT-CO2 and MT-CO3, encoded in the mitochondrial DNA, and 11 supernumerary subunits COX4I, COX5A, COX5B, COX6A, COX6B, COX6C, COX7A, COX7B, COX7C, COX8 and NDUFA4, which are encoded in the nuclear genome. The complex exists as a monomer or a dimer and forms supercomplexes (SCs) in the inner mitochondrial membrane with NADH-ubiquinone oxidoreductase (complex I, CI) and ubiquinol-cytochrome c oxidoreductase (cytochrome b-c1 complex, complex III, CIII), resulting in different assemblies (supercomplex SCI(1)III(2)IV(1) and megacomplex MCI(2)III(2)IV(2)). Found in a complex with TMEM177, COA6, COX18, COX20, SCO1 and SCO2. Interacts with TMEM177 in a COX20-dependent manner. Interacts with COX20. Interacts with COX16. Cu cation is required as a cofactor.

It localises to the mitochondrion inner membrane. The enzyme catalyses 4 Fe(II)-[cytochrome c] + O2 + 8 H(+)(in) = 4 Fe(III)-[cytochrome c] + 2 H2O + 4 H(+)(out). In terms of biological role, component of the cytochrome c oxidase, the last enzyme in the mitochondrial electron transport chain which drives oxidative phosphorylation. The respiratory chain contains 3 multisubunit complexes succinate dehydrogenase (complex II, CII), ubiquinol-cytochrome c oxidoreductase (cytochrome b-c1 complex, complex III, CIII) and cytochrome c oxidase (complex IV, CIV), that cooperate to transfer electrons derived from NADH and succinate to molecular oxygen, creating an electrochemical gradient over the inner membrane that drives transmembrane transport and the ATP synthase. Cytochrome c oxidase is the component of the respiratory chain that catalyzes the reduction of oxygen to water. Electrons originating from reduced cytochrome c in the intermembrane space (IMS) are transferred via the dinuclear copper A center (CU(A)) of subunit 2 and heme A of subunit 1 to the active site in subunit 1, a binuclear center (BNC) formed by heme A3 and copper B (CU(B)). The BNC reduces molecular oxygen to 2 water molecules using 4 electrons from cytochrome c in the IMS and 4 protons from the mitochondrial matrix. The chain is Cytochrome c oxidase subunit 2 (MT-CO2) from Sus scrofa (Pig).